The chain runs to 526 residues: Probable feruloyl esterase B-2 (526 aa).

Residues 1 to 19 (MPSLRRLLPFLAAGSAALA) form the signal peptide. 2 cysteine pairs are disulfide-bonded: C28-C75 and C63-C114. 4 N-linked (GlcNAc...) asparagine glycosylation sites follow: N53, N85, N98, and N138. Cystine bridges form between C187–C441, C256–C273, and C282–C291. S188 serves as the catalytic Acyl-ester intermediate. N246 is a glycosylation site (N-linked (GlcNAc...) asparagine). Positions 257, 260, 262, 264, and 266 each coordinate Ca(2+). 2 N-linked (GlcNAc...) asparagine glycosylation sites follow: N287 and N311. Residues D400 and H440 each act as charge relay system in the active site. N-linked (GlcNAc...) asparagine glycans are attached at residues N490 and N516. C503 and C525 form a disulfide bridge.

It belongs to the tannase family.

Its subcellular location is the secreted. The catalysed reaction is feruloyl-polysaccharide + H2O = ferulate + polysaccharide.. Involved in degradation of plant cell walls. Hydrolyzes the feruloyl-arabinose ester bond in arabinoxylans as well as the feruloyl-galactose and feruloyl-arabinose ester bonds in pectin. The polypeptide is Probable feruloyl esterase B-2 (faeB-2) (Aspergillus oryzae (strain ATCC 42149 / RIB 40) (Yellow koji mold)).